A 389-amino-acid polypeptide reads, in one-letter code: Lipid-A-disaccharide synthase (389 aa).

The protein belongs to the LpxB family.

It carries out the reaction a lipid X + a UDP-2-N,3-O-bis[(3R)-3-hydroxyacyl]-alpha-D-glucosamine = a lipid A disaccharide + UDP + H(+). Its pathway is bacterial outer membrane biogenesis; LPS lipid A biosynthesis. Condensation of UDP-2,3-diacylglucosamine and 2,3-diacylglucosamine-1-phosphate to form lipid A disaccharide, a precursor of lipid A, a phosphorylated glycolipid that anchors the lipopolysaccharide to the outer membrane of the cell. The protein is Lipid-A-disaccharide synthase of Burkholderia ambifaria (strain ATCC BAA-244 / DSM 16087 / CCUG 44356 / LMG 19182 / AMMD) (Burkholderia cepacia (strain AMMD)).